The chain runs to 313 residues: Protein FixB (313 aa).

Leu255–Asp283 contributes to the FAD binding site.

The protein belongs to the ETF alpha-subunit/FixB family. Heterodimer of FixA and FixB.

The protein operates within amine and polyamine metabolism; carnitine metabolism. Required for anaerobic carnitine reduction. May bring reductant to CaiA. The polypeptide is Protein FixB (Escherichia coli (strain K12 / MC4100 / BW2952)).